The following is a 247-amino-acid chain: Phosphoribosylaminoimidazole-succinocarboxamide synthase (247 aa).

Belongs to the SAICAR synthetase family.

It catalyses the reaction 5-amino-1-(5-phospho-D-ribosyl)imidazole-4-carboxylate + L-aspartate + ATP = (2S)-2-[5-amino-1-(5-phospho-beta-D-ribosyl)imidazole-4-carboxamido]succinate + ADP + phosphate + 2 H(+). It functions in the pathway purine metabolism; IMP biosynthesis via de novo pathway; 5-amino-1-(5-phospho-D-ribosyl)imidazole-4-carboxamide from 5-amino-1-(5-phospho-D-ribosyl)imidazole-4-carboxylate: step 1/2. This Herpetosiphon aurantiacus (strain ATCC 23779 / DSM 785 / 114-95) protein is Phosphoribosylaminoimidazole-succinocarboxamide synthase.